Consider the following 284-residue polypeptide: Aspartate dehydrogenase domain-containing protein (284 aa).

This sequence belongs to the L-aspartate dehydrogenase family.

The sequence is that of Aspartate dehydrogenase domain-containing protein (aspdh) from Xenopus tropicalis (Western clawed frog).